A 332-amino-acid chain; its full sequence is Glyceraldehyde-3-phosphate dehydrogenase 3 (332 aa).

Arginine 11, isoleucine 12, and aspartate 33 together coordinate NAD(+). Residues lysine 46 and lysine 63 each participate in a glycyl lysine isopeptide (Lys-Gly) (interchain with G-Cter in ubiquitin) cross-link. Residue threonine 120 participates in NAD(+) binding. 149-151 (SCT) provides a ligand contact to D-glyceraldehyde 3-phosphate. Cysteine 150 (nucleophile) is an active-site residue. Cysteine 150 and cysteine 154 each carry cysteine persulfide. A Glycyl lysine isopeptide (Lys-Gly) (interchain with G-Cter in URM1) cross-link involves residue lysine 160. Residues threonine 180, 209–210 (TG), and arginine 232 each bind D-glyceraldehyde 3-phosphate. Serine 302 bears the Phosphoserine mark. Residue lysine 307 forms a Glycyl lysine isopeptide (Lys-Gly) (interchain with G-Cter in URM1) linkage. 2 residues coordinate NAD(+): asparagine 314 and tyrosine 318.

Belongs to the glyceraldehyde-3-phosphate dehydrogenase family. As to quaternary structure, homotetramer. Post-translationally, conjugated to URM1, a ubiquitin-like protein, in response to oxidative stresses. The attachment of URM1 to lysine residues exclusively depends on the presence of a peroxidatic cysteine in the target protein, with low specificity for the particular residue, motif, or structural context at which urmylation can occur. The URM1-conjugation reaction is mechanistically and directly coupled to the process of cysteine persulfidation, transfering the sulfur atom of the URM1 thiocarboxyl group to redox-active cysteine residues in the target protein if it is exposed to oxidative conditions. Persulfidated on specific redox-active cysteine residues. Persulfidation (also called protein S-sulfhydration) may provide a molecular mechanism that enables cells to protect vulnerable cysteine residues from reactive oxygen species (ROS) under stress conditions.

The protein resides in the cytoplasm. Its subcellular location is the mitochondrion. It carries out the reaction D-glyceraldehyde 3-phosphate + phosphate + NAD(+) = (2R)-3-phospho-glyceroyl phosphate + NADH + H(+). The enzyme catalyses NADH + H2O = (6R)-NADHX. It catalyses the reaction NADH + H2O = (6S)-NADHX. The catalysed reaction is NADPH + H2O = (6R)-NADPHX. It carries out the reaction NADPH + H2O = (6S)-NADPHX. The protein operates within carbohydrate degradation; glycolysis; pyruvate from D-glyceraldehyde 3-phosphate: step 1/5. Glyceraldehyde-3-phosphate dehydrogenase (GAPDH) involved in glycolysis and gluconeogenesis. Catalyzes the reaction of glyceraldehyde-3-phosphate to 1,3 bis-phosphoglycerate. The contribution of the TDH1, TDH2, and TDH3 to the total glyceraldehyde-3-phosphate dehydrogenase activity is 10-15, 25-30, and 50-60%, respectively. In terms of biological role, as a side activity, catalyzes the hydration of the nicotinamide ring of NADH or NADPH at the C6 position to give the corresponding hydrates, NADHX and NADPHX, which exist as R and S epimers, that cannot act as electron donors or acceptors and inhibit several dehydrogenases, making them toxic. The sequence is that of Glyceraldehyde-3-phosphate dehydrogenase 3 from Saccharomyces cerevisiae (strain ATCC 204508 / S288c) (Baker's yeast).